The sequence spans 282 residues: MTKLHKYLPQRTLSKIVGWLATREWGLLTQWAIRLFIRHYGINMQEAQYPDIGHYPSFNAFFTRYLKRELRPVVEEPLAIASPVDGIISEMGQIKGENLIQAKNHHYTITALLGEDPSRASQFLDGDFFTAYLAPKNYHRIHMPLDGRLIEMIHIPGKLFSVNPASVQTVPRLFARNERAVCLFETENGLMAVILVGAMLVGSINTVWHGTVVPTAEGIAVHNYREKNIKFKRGEEIGHFKMGSTVILLFPKNTIQWNPNCQPKGTICYGENIGTVSLIEVA.

Residues Asp85, His142, and Ser244 each act as charge relay system; for autoendoproteolytic cleavage activity in the active site. The Schiff-base intermediate with substrate; via pyruvic acid; for decarboxylase activity role is filled by Ser244. At Ser244 the chain carries Pyruvic acid (Ser); by autocatalysis.

It belongs to the phosphatidylserine decarboxylase family. PSD-B subfamily. Prokaryotic type I sub-subfamily. As to quaternary structure, heterodimer of a large membrane-associated beta subunit and a small pyruvoyl-containing alpha subunit. Pyruvate is required as a cofactor. Is synthesized initially as an inactive proenzyme. Formation of the active enzyme involves a self-maturation process in which the active site pyruvoyl group is generated from an internal serine residue via an autocatalytic post-translational modification. Two non-identical subunits are generated from the proenzyme in this reaction, and the pyruvate is formed at the N-terminus of the alpha chain, which is derived from the carboxyl end of the proenzyme. The autoendoproteolytic cleavage occurs by a canonical serine protease mechanism, in which the side chain hydroxyl group of the serine supplies its oxygen atom to form the C-terminus of the beta chain, while the remainder of the serine residue undergoes an oxidative deamination to produce ammonia and the pyruvoyl prosthetic group on the alpha chain. During this reaction, the Ser that is part of the protease active site of the proenzyme becomes the pyruvoyl prosthetic group, which constitutes an essential element of the active site of the mature decarboxylase.

It is found in the cell membrane. The catalysed reaction is a 1,2-diacyl-sn-glycero-3-phospho-L-serine + H(+) = a 1,2-diacyl-sn-glycero-3-phosphoethanolamine + CO2. The protein operates within phospholipid metabolism; phosphatidylethanolamine biosynthesis; phosphatidylethanolamine from CDP-diacylglycerol: step 2/2. Functionally, catalyzes the formation of phosphatidylethanolamine (PtdEtn) from phosphatidylserine (PtdSer). The sequence is that of Phosphatidylserine decarboxylase proenzyme from Coxiella burnetii (strain Dugway 5J108-111).